The sequence spans 216 residues: Twisted gastrulation protein homolog 1-A (216 aa).

The N-terminal stretch at 1–25 is a signal peptide; it reads MKPSFLHIPAAALLLCSLWILPIYC. N-linked (GlcNAc...) asparagine glycans are attached at residues asparagine 52, asparagine 81, and asparagine 145.

This sequence belongs to the twisted gastrulation protein family. In terms of assembly, binds directly to bmp2, bmp4 and bmp7 and can form a ternary complex with bmps and chordin, thus preventing the binding of bmps to their cell surface receptors. In terms of tissue distribution, posterior defects are induced by overexpression. This may arise through alteration of bmp4 or chrd function in the developing tailbud region.

Its subcellular location is the secreted. Functionally, involved in dorsal-ventral patterning, permitting peak BMP signaling by antagonizing the residual anti-BMP activity of the cleavage products of chrd. Functions to promote the formation of ventral mesoderm by increasing the activity of bmp7 and other BMPS. Seems to antagonize BMP signaling by forming ternary complexes with chrd and BMPs, thereby preventing BMPs from binding to their receptors. In addition to the anti-BMP function, also has pro-BMP activity, partly mediated by cleavage and degradation of chrd, which releases BMPs from ternary complexes. May be an important modulator of BMP-regulated cartilage development and chondrocyte differentiation. This is Twisted gastrulation protein homolog 1-A (twsg1-a) from Xenopus laevis (African clawed frog).